The sequence spans 228 residues: MENQPKLNSSKEVIAFLAERFPHCFSAEGEARPLKIGIFQDLVERVGGEMNLSKTQLRSALRLYTSSWRYLYGVKPGATRVDLDGNPCGELEEQHVEHARKQLEEAKARVQAQRAEQQAKKREAAAAAGEKEDAPRRERKPRPVARRKEGAERKPRADKPTTKAPRAPREEKHTPVSDISVLTVGQSLKVKAGNNAMDATVLEITKDGVRVQLNSGMSLIVRAEHLVF.

The disordered stretch occupies residues 107-178; it reads KARVQAQRAE…REEKHTPVSD (72 aa). Composition is skewed to basic and acidic residues over residues 117 to 136 and 146 to 175; these read QQAK…DAPR and RRKE…KHTP.

It belongs to the ProQ family.

It is found in the cytoplasm. RNA chaperone with significant RNA binding, RNA strand exchange and RNA duplexing activities. May regulate ProP activity through an RNA-based, post-transcriptional mechanism. The sequence is that of RNA chaperone ProQ from Salmonella agona (strain SL483).